A 776-amino-acid chain; its full sequence is Transferrin receptor protein 1 (776 aa).

At 1-70 (MDHARAALSN…QPQRNGKRLC (70 aa)) the chain is on the cytoplasmic side. Residues 19 to 22 (YTRF) carry the Endocytosis signal motif. Position 23 is a phosphoserine (serine 23). Cysteine 70 is lipidated: S-palmitoyl cysteine. The chain crosses the membrane as a helical; Signal-anchor for type II membrane protein span at residues 71 to 91 (FLVIAAVLLLLIGFLIGYLSY). The Extracellular segment spans residues 92-776 (RGRIELAARC…GDIWETDNEF (685 aa)). The region spanning 230-322 (SESGSVSGKP…GTGDPYTPGF (93 aa)) is the PA domain. Asparagine 261, asparagine 326, and asparagine 391 each carry an N-linked (GlcNAc...) asparagine glycan. The tract at residues 586 to 776 (KGDTLENLRK…GDIWETDNEF (191 aa)) is ligand-binding. The short motif at 662 to 664 (RGD) is the Cell attachment site element. Asparagine 738 carries an N-linked (GlcNAc...) asparagine glycan.

It belongs to the peptidase M28 family. M28B subfamily. As to quaternary structure, homodimer; disulfide-linked. Binds one transferrin molecule per subunit. In terms of processing, stearoylated. Stearoylation does not affect iron uptake. N- and O-glycosylated, phosphorylated and palmitoylated.

It localises to the cell membrane. It is found in the melanosome. In terms of biological role, cellular uptake of iron occurs via receptor-mediated endocytosis of ligand-occupied transferrin receptor into specialized endosomes. Endosomal acidification leads to iron release. The apotransferrin-receptor complex is then recycled to the cell surface with a return to neutral pH and the concomitant loss of affinity of apotransferrin for its receptor. Transferrin receptor is necessary for development of erythrocytes and the nervous system. Acts as a lipid sensor that regulates mitochondrial fusion by regulating activation of the JNK pathway. When dietary levels of stearate (C18:0) are low, promotes activation of the JNK pathway, resulting in HUWE1-mediated ubiquitination and subsequent degradation of the mitofusin MFN2 and inhibition of mitochondrial fusion. When dietary levels of stearate (C18:0) are high, TFRC stearoylation inhibits activation of the JNK pathway and thus degradation of the mitofusin MFN2. Mediates uptake of NICOL1 into fibroblasts where it may regulate extracellular matrix production. This is Transferrin receptor protein 1 (TFRC) from Gallus gallus (Chicken).